Here is a 22-residue protein sequence, read N- to C-terminus: Dioicin-1 (22 aa).

Its subcellular location is the secreted. The protein resides in the extracellular space. The protein localises to the golgi apparatus. It is found in the vacuole. The enzyme catalyses Endohydrolysis of the N-glycosidic bond at one specific adenosine on the 28S rRNA.. Its function is as follows. Nicks pBR322 dsDNA. Has adenine polynucleotide glycosidase activity on herring sperm ssDNA. The sequence is that of Dioicin-1 from Phytolacca dioica (Bella sombra tree).